The chain runs to 155 residues: Ribosome maturation factor RimP (155 aa).

The protein belongs to the RimP family.

It localises to the cytoplasm. Its function is as follows. Required for maturation of 30S ribosomal subunits. The protein is Ribosome maturation factor RimP of Prochlorococcus marinus (strain AS9601).